Consider the following 387-residue polypeptide: Eukaryotic translation initiation factor 3 subunit M (387 aa).

The PCI domain maps to 181–340; sequence LSSKVMIELL…QKVHISSTMH (160 aa).

Belongs to the eIF-3 subunit M family. As to quaternary structure, component of the eukaryotic translation initiation factor 3 (eIF-3) complex. The eIF-3 complex interacts with pix.

The protein resides in the cytoplasm. It localises to the golgi apparatus. Functionally, component of the eukaryotic translation initiation factor 3 (eIF-3) complex, which is involved in protein synthesis of a specialized repertoire of mRNAs and, together with other initiation factors, stimulates binding of mRNA and methionyl-tRNAi to the 40S ribosome. The eIF-3 complex specifically targets and initiates translation of a subset of mRNAs involved in cell proliferation. The protein is Eukaryotic translation initiation factor 3 subunit M of Drosophila sechellia (Fruit fly).